A 632-amino-acid chain; its full sequence is tRNA-guanine(15) transglycosylase (632 aa).

Aspartate 86 serves as the catalytic Nucleophile. The substrate site is built by aspartate 121 and glycine 186. Positions 553–628 constitute a PUA domain; the sequence is AMRVTVSKES…IAVKVHEGRD (76 aa).

This sequence belongs to the archaeosine tRNA-ribosyltransferase family. The cofactor is Zn(2+).

The catalysed reaction is guanosine(15) in tRNA + 7-cyano-7-deazaguanine = 7-cyano-7-carbaguanosine(15) in tRNA + guanine. It functions in the pathway tRNA modification; archaeosine-tRNA biosynthesis. Exchanges the guanine residue with 7-cyano-7-deazaguanine (preQ0) at position 15 in the dihydrouridine loop (D-loop) of archaeal tRNAs. The sequence is that of tRNA-guanine(15) transglycosylase from Thermoplasma acidophilum (strain ATCC 25905 / DSM 1728 / JCM 9062 / NBRC 15155 / AMRC-C165).